The sequence spans 212 residues: Probable transaldolase (212 aa).

Residue lysine 84 is the Schiff-base intermediate with substrate of the active site.

This sequence belongs to the transaldolase family. Type 3B subfamily.

The protein localises to the cytoplasm. The enzyme catalyses D-sedoheptulose 7-phosphate + D-glyceraldehyde 3-phosphate = D-erythrose 4-phosphate + beta-D-fructose 6-phosphate. The protein operates within carbohydrate degradation; pentose phosphate pathway; D-glyceraldehyde 3-phosphate and beta-D-fructose 6-phosphate from D-ribose 5-phosphate and D-xylulose 5-phosphate (non-oxidative stage): step 2/3. Transaldolase is important for the balance of metabolites in the pentose-phosphate pathway. This is Probable transaldolase from Bacillus pumilus (strain SAFR-032).